The primary structure comprises 329 residues: uncharacterized protein (329 aa).

Coiled coils occupy residues lysine 57–valine 119 and alanine 224–valine 250.

This is an uncharacterized protein from Macaca fascicularis (Crab-eating macaque).